A 606-amino-acid polypeptide reads, in one-letter code: Putative auxin response factor 21 (606 aa).

Residues 126 to 228 constitute a DNA-binding region (TF-B3); it reads FTKVLTASDT…ELRVGIRRAR (103 aa). Residues 511-592 form the PB1 domain; sequence RTCTKVQMQG…MVKKILIYSK (82 aa).

This sequence belongs to the ARF family. In terms of assembly, homodimers and heterodimers.

The protein localises to the nucleus. Functionally, auxin response factors (ARFs) are transcriptional factors that bind specifically to the DNA sequence 5'-TGTCTC-3' found in the auxin-responsive promoter elements (AuxREs). Could act as transcriptional activator or repressor. Formation of heterodimers with Aux/IAA proteins may alter their ability to modulate early auxin response genes expression. This chain is Putative auxin response factor 21 (ARF21), found in Arabidopsis thaliana (Mouse-ear cress).